The primary structure comprises 310 residues: Probable GTP 3',8-cyclase (310 aa).

Residues 5–232 (RFGRPVTNLR…RRRKYFIPID (228 aa)) form the Radical SAM core domain. Arg-14 is a GTP binding site. The [4Fe-4S] cluster site is built by Cys-21 and Cys-25. Tyr-27 contributes to the S-adenosyl-L-methionine binding site. Residue Cys-28 participates in [4Fe-4S] cluster binding. Lys-61 provides a ligand contact to GTP. Gly-65 is an S-adenosyl-L-methionine binding site. Thr-90 is a binding site for GTP. Ser-114 contacts S-adenosyl-L-methionine. Lys-150 lines the GTP pocket. Met-189 contacts S-adenosyl-L-methionine. [4Fe-4S] cluster contacts are provided by Cys-250 and Cys-253. 255-257 (RLR) provides a ligand contact to GTP. Cys-267 serves as a coordination point for [4Fe-4S] cluster.

The protein belongs to the radical SAM superfamily. MoaA family. [4Fe-4S] cluster is required as a cofactor.

It carries out the reaction GTP + AH2 + S-adenosyl-L-methionine = (8S)-3',8-cyclo-7,8-dihydroguanosine 5'-triphosphate + 5'-deoxyadenosine + L-methionine + A + H(+). It participates in cofactor biosynthesis; molybdopterin biosynthesis. Catalyzes the cyclization of GTP to (8S)-3',8-cyclo-7,8-dihydroguanosine 5'-triphosphate. The polypeptide is Probable GTP 3',8-cyclase (Pyrococcus horikoshii (strain ATCC 700860 / DSM 12428 / JCM 9974 / NBRC 100139 / OT-3)).